The following is a 616-amino-acid chain: Dihydroxy-acid dehydratase (616 aa).

Asp81 contributes to the Mg(2+) binding site. Cys122 is a binding site for [2Fe-2S] cluster. Positions 123 and 124 each coordinate Mg(2+). Lys124 bears the N6-carboxylysine mark. Cys195 contacts [2Fe-2S] cluster. Mg(2+) is bound at residue Glu491. Residue Ser517 is the Proton acceptor of the active site.

The protein belongs to the IlvD/Edd family. As to quaternary structure, homodimer. Requires [2Fe-2S] cluster as cofactor. Mg(2+) serves as cofactor.

The catalysed reaction is (2R)-2,3-dihydroxy-3-methylbutanoate = 3-methyl-2-oxobutanoate + H2O. The enzyme catalyses (2R,3R)-2,3-dihydroxy-3-methylpentanoate = (S)-3-methyl-2-oxopentanoate + H2O. It functions in the pathway amino-acid biosynthesis; L-isoleucine biosynthesis; L-isoleucine from 2-oxobutanoate: step 3/4. Its pathway is amino-acid biosynthesis; L-valine biosynthesis; L-valine from pyruvate: step 3/4. Its function is as follows. Functions in the biosynthesis of branched-chain amino acids. Catalyzes the dehydration of (2R,3R)-2,3-dihydroxy-3-methylpentanoate (2,3-dihydroxy-3-methylvalerate) into 2-oxo-3-methylpentanoate (2-oxo-3-methylvalerate) and of (2R)-2,3-dihydroxy-3-methylbutanoate (2,3-dihydroxyisovalerate) into 2-oxo-3-methylbutanoate (2-oxoisovalerate), the penultimate precursor to L-isoleucine and L-valine, respectively. The protein is Dihydroxy-acid dehydratase of Escherichia coli O9:H4 (strain HS).